Here is a 420-residue protein sequence, read N- to C-terminus: Ribosome biogenesis protein WDR12 homolog (420 aa).

Positions 10-92 (VQVHLKTKQE…EDAIEIEYVE (83 aa)) are ubiquitin-like (UBL) domain. 7 WD repeats span residues 104-142 (LHDD…LTIS), 143-185 (GHTA…NSVE), 192-231 (GHER…AAEG), 250-288 (GHRE…IKTE), 290-329 (STNK…GSVV), 335-375 (GHNA…APLY), and 379-417 (GHGE…AEDT).

Belongs to the WD repeat WDR12/YTM1 family.

It is found in the nucleus. Its subcellular location is the nucleolus. The protein localises to the nucleoplasm. Required for maturation of ribosomal RNAs and formation of the large ribosomal subunit. This chain is Ribosome biogenesis protein WDR12 homolog, found in Drosophila erecta (Fruit fly).